We begin with the raw amino-acid sequence, 366 residues long: Phospho-N-acetylmuramoyl-pentapeptide-transferase (366 aa).

10 helical membrane-spanning segments follow: residues 27 to 47, 71 to 91, 93 to 113, 138 to 158, 174 to 194, 205 to 225, 245 to 265, 268 to 288, 297 to 317, and 343 to 363; these read AALF…IASL, TPTM…LLWA, LSSI…AIGF, FVIA…AGAA, LMLN…VGAG, GLAI…AYLA, LAVI…FNAP, AIFM…TVAV, IIIG…VFWF, and QVVI…LSTL.

This sequence belongs to the glycosyltransferase 4 family. MraY subfamily. Mg(2+) is required as a cofactor.

The protein localises to the cell inner membrane. It carries out the reaction UDP-N-acetyl-alpha-D-muramoyl-L-alanyl-gamma-D-glutamyl-meso-2,6-diaminopimeloyl-D-alanyl-D-alanine + di-trans,octa-cis-undecaprenyl phosphate = di-trans,octa-cis-undecaprenyl diphospho-N-acetyl-alpha-D-muramoyl-L-alanyl-D-glutamyl-meso-2,6-diaminopimeloyl-D-alanyl-D-alanine + UMP. Its pathway is cell wall biogenesis; peptidoglycan biosynthesis. In terms of biological role, catalyzes the initial step of the lipid cycle reactions in the biosynthesis of the cell wall peptidoglycan: transfers peptidoglycan precursor phospho-MurNAc-pentapeptide from UDP-MurNAc-pentapeptide onto the lipid carrier undecaprenyl phosphate, yielding undecaprenyl-pyrophosphoryl-MurNAc-pentapeptide, known as lipid I. This chain is Phospho-N-acetylmuramoyl-pentapeptide-transferase, found in Rhizobium meliloti (strain 1021) (Ensifer meliloti).